The chain runs to 150 residues: Cytochrome c oxidase subunit 5A, mitochondrial (150 aa).

The N-terminal 41 residues, 1-41 (MLGAALRRCAVAATTWAGPRGLLHSARTPGPAAAIQSVRCY), are a transit peptide targeting the mitochondrion. An SIFI-degron motif is present at residues 2 to 20 (LGAALRRCAVAATTWAGPR). An N6-acetyllysine mark is found at lysine 87 and lysine 113. Threonine 141 bears the Phosphothreonine mark.

The protein belongs to the cytochrome c oxidase subunit 5A family. As to quaternary structure, component of the cytochrome c oxidase (complex IV, CIV), a multisubunit enzyme composed of 14 subunits. The complex is composed of a catalytic core of 3 subunits MT-CO1, MT-CO2 and MT-CO3, encoded in the mitochondrial DNA, and 11 supernumerary subunits COX4I, COX5A, COX5B, COX6A, COX6B, COX6C, COX7A, COX7B, COX7C, COX8 and NDUFA4, which are encoded in the nuclear genome. The complex exists as a monomer or a dimer and forms supercomplexes (SCs) in the inner mitochondrial membrane with NADH-ubiquinone oxidoreductase (complex I, CI) and ubiquinol-cytochrome c oxidoreductase (cytochrome b-c1 complex, complex III, CIII), resulting in different assemblies (supercomplex SCI(1)III(2)IV(1) and megacomplex MCI(2)III(2)IV(2)). Interacts with AFG1L. Interacts with RAB5IF. In response to mitochondrial stress, the precursor protein is ubiquitinated by the SIFI complex in the cytoplasm before mitochondrial import, leading to its degradation. Within the SIFI complex, UBR4 initiates ubiquitin chain that are further elongated or branched by KCMF1.

The protein resides in the mitochondrion inner membrane. Its pathway is energy metabolism; oxidative phosphorylation. Component of the cytochrome c oxidase, the last enzyme in the mitochondrial electron transport chain which drives oxidative phosphorylation. The respiratory chain contains 3 multisubunit complexes succinate dehydrogenase (complex II, CII), ubiquinol-cytochrome c oxidoreductase (cytochrome b-c1 complex, complex III, CIII) and cytochrome c oxidase (complex IV, CIV), that cooperate to transfer electrons derived from NADH and succinate to molecular oxygen, creating an electrochemical gradient over the inner membrane that drives transmembrane transport and the ATP synthase. Cytochrome c oxidase is the component of the respiratory chain that catalyzes the reduction of oxygen to water. Electrons originating from reduced cytochrome c in the intermembrane space (IMS) are transferred via the dinuclear copper A center (CU(A)) of subunit 2 and heme A of subunit 1 to the active site in subunit 1, a binuclear center (BNC) formed by heme A3 and copper B (CU(B)). The BNC reduces molecular oxygen to 2 water molecules using 4 electrons from cytochrome c in the IMS and 4 protons from the mitochondrial matrix. This Macaca mulatta (Rhesus macaque) protein is Cytochrome c oxidase subunit 5A, mitochondrial (COX5A).